Consider the following 37-residue polypeptide: Large ribosomal subunit protein bL36 (37 aa).

It belongs to the bacterial ribosomal protein bL36 family.

This chain is Large ribosomal subunit protein bL36, found in Sulfurovum sp. (strain NBC37-1).